Consider the following 1481-residue polypeptide: Cystic fibrosis transmembrane conductance regulator (1481 aa).

Residues 1–77 are Cytoplasmic-facing; that stretch reads MQRSPLEKAS…KLINALRRCF (77 aa). Residues 78–98 traverse the membrane as a helical segment; the sequence is FWRFMFYGILLYLGEVTKAVQ. The ABC transmembrane type-1 1 domain occupies 81 to 365; that stretch reads FMFYGILLYL…WAVQTWYDSL (285 aa). Topologically, residues 99–122 are extracellular; the sequence is PLLLGRIIASYDPDNKVERSIAIY. A helical transmembrane segment spans residues 123 to 146; the sequence is LGIGLCLLFIVRMLLLHPAIFGLH. At 147-195 the chain is on the cytoplasmic side; the sequence is HIGMQMRIAMFSLIYKKILKLSSRVLDKISIGQLVSLLSNNLNKFDEGL. The helical transmembrane segment at 196–216 threads the bilayer; the sequence is ALAHFVWIAPLQVMLLMGLLW. Over 217–222 the chain is Extracellular; sequence ELLQAS. A helical transmembrane segment spans residues 223-243; that stretch reads AFCGLGFLIVLALFQSGLGRM. Residues 244–298 lie on the Cytoplasmic side of the membrane; sequence MMKYRDQRAGKINERLVITSEMIENIQSVKAYCWEEAMEKMIENLRQTELKLTRK. Residues 299–319 traverse the membrane as a helical segment; that stretch reads AAYVRYFNSSAFFFSGFFVVF. The Extracellular segment spans residues 320-339; sequence LSVLPYALIKGIILRKIFTT. A helical membrane pass occupies residues 340 to 358; that stretch reads ISFCIVLRMAVTRQFPWAV. The Cytoplasmic segment spans residues 359 to 858; it reads QTWYDSLGAI…YLRYITVHKS (500 aa). Residues W401, 458 to 465, and Q493 contribute to the ATP site; that span reads GSTGAGKT. Residues 423 to 646 form the ABC transporter 1 domain; it reads NGDNSLFFSN…RPDFSSKLMG (224 aa). A lipid anchor (S-palmitoyl cysteine) is attached at C524. Residues S549 and S660 each carry the phosphoserine modification. Residues 654–831 are disordered R region; that stretch reads SAERRNSILT…EEINEEDLKE (178 aa). S670 carries the phosphoserine; by PKA modification. Position 686 is a phosphoserine (S686). K688 participates in a covalent cross-link: Glycyl lysine isopeptide (Lys-Gly) (interchain with G-Cter in ubiquitin). Residues S700 and S712 each carry the phosphoserine modification. Position 717 is a phosphothreonine (T717). Phosphoserine is present on residues S737, S768, S790, S795, and S813. Residues 859–879 form a helical membrane-spanning segment; the sequence is LIFVLIWCLVIFLAEVAVSLV. Residues 859 to 1155 form the ABC transmembrane type-1 2 domain; it reads LIFVLIWCLV…AVNSSIDVDS (297 aa). The Extracellular segment spans residues 880–918; the sequence is LLWLLGNAPAYNKGNSTISANSSYAVIITSTSAYYVFYI. N894 and N900 each carry an N-linked (GlcNAc...) asparagine glycan. The discontinuously helical transmembrane segment at 919–939 threads the bilayer; it reads YVGVADTLLALGFFRGLPLVH. At 940 to 990 the chain is on the cytoplasmic side; that stretch reads TLITVSKILHHKMLHSVLQAPMSTLNALKAGGILNRFSKDIAILDDLLPLT. The chain crosses the membrane as a helical span at residues 991–1011; that stretch reads IFDFIQLLLIVIGAVAVVSVL. Residues 1012–1013 are Extracellular-facing; that stretch reads QP. Residues 1014–1034 traverse the membrane as a helical segment; the sequence is YIFLATVPVIVTFIILRAYFL. Over 1035 to 1095 the chain is Cytoplasmic; that stretch reads HTSQQLKQLE…TANWFLYLST (61 aa). Residues 1096–1116 traverse the membrane as a helical segment; sequence LRWFQMRIEMVFVIFFIVVTF. Over 1117–1130 the chain is Extracellular; sequence ISILTTGEGEGQVG. Residues 1131–1151 form a helical membrane-spanning segment; it reads IILTLAMNIMGTLQWAVNSSI. The Cytoplasmic segment spans residues 1152 to 1481; it reads DVDSLMRSVS…TEEEVQDTRL (330 aa). The region spanning 1211–1444 is the ABC transporter 2 domain; that stretch reads MTVKDLTARY…KSLFRQAISP (234 aa). ATP contacts are provided by residues Y1220 and 1245–1252; that span reads GRTGSGKS. An interaction with GORASP2 region spans residues 1387–1481; it reads RTLKQAFADC…TEEEVQDTRL (95 aa). C1396 is lipidated: S-palmitoyl cysteine. 2 positions are modified to phosphoserine: S1445 and S1457. The interval 1449-1481 is disordered; sequence KLFPRRNSSKHKSRPPITALKEETEEEVQDTRL. A compositionally biased stretch (basic residues) spans 1450-1462; it reads LFPRRNSSKHKSR. A compositionally biased stretch (acidic residues) spans 1471–1481; sequence ETEEEVQDTRL. The PDZ-binding motif lies at 1479–1481; that stretch reads TRL.

The protein belongs to the ABC transporter superfamily. ABCC family. CFTR transporter (TC 3.A.1.202) subfamily. As to quaternary structure, monomer; does not require oligomerization for channel activity. May form oligomers in the membrane. Interacts with SLC26A3, SLC26A6 and NHERF1. Interacts with SHANK2. Interacts with MYO6. Interacts (via C-terminus) with GOPC (via PDZ domain); this promotes CFTR internalization and thereby decreases channel activity. Interacts with SLC4A7 through NHERF1. Found in a complex with MYO5B and RAB11A. Interacts with ANO1. Interacts with SLC26A8. Interacts with AHCYL1; the interaction increases CFTR activity. Interacts with CSE1L. The core-glycosylated form interacts with GORASP2 (via PDZ GRASP-type 1 domain) in respone to ER stress. Interacts with MARCHF2; the interaction leads to CFTR ubiqtuitination and degradation. Interacts with ADGRG2. In terms of processing, N-glycosylated. Phosphorylated; cAMP treatment promotes phosphorylation and activates the channel. Dephosphorylation decreases the ATPase activity (in vitro). Phosphorylation at PKA sites activates the channel. Phosphorylation at PKC sites enhances the response to phosphorylation by PKA. Phosphorylated by AMPK; this inhibits channel activity. Post-translationally, ubiquitinated, leading to its degradation in the lysosome. Deubiquitination by USP10 in early endosomes enhances its endocytic recycling to the cell membrane. Ubiquitinated by RNF185 during ER stress. Ubiquitinated by MARCHF2.

Its subcellular location is the apical cell membrane. It localises to the early endosome membrane. The protein resides in the cell membrane. The protein localises to the recycling endosome membrane. It is found in the endoplasmic reticulum membrane. Its subcellular location is the nucleus. It carries out the reaction ATP + H2O + closed Cl(-) channel = ADP + phosphate + open Cl(-) channel.. It catalyses the reaction chloride(in) = chloride(out). The catalysed reaction is hydrogencarbonate(in) = hydrogencarbonate(out). The enzyme catalyses ATP + H2O = ADP + phosphate + H(+). Epithelial ion channel that plays an important role in the regulation of epithelial ion and water transport and fluid homeostasis. Mediates the transport of chloride ions across the cell membrane. Possesses an intrinsic ATPase activity and utilizes ATP to gate its channel; the passive flow of anions through the channel is gated by cycles of ATP binding and hydrolysis by the ATP-binding domains. The ion channel is also permeable to HCO(3)(-); selectivity depends on the extracellular chloride concentration. Exerts its function also by modulating the activity of other ion channels and transporters. Contributes to the regulation of the pH and the ion content of the epithelial fluid layer. Modulates the activity of the epithelial sodium channel (ENaC) complex, in part by regulating the cell surface expression of the ENaC complex. May regulate bicarbonate secretion and salvage in epithelial cells by regulating the transporter SLC4A7. Can inhibit the chloride channel activity of ANO1. Plays a role in the chloride and bicarbonate homeostasis during sperm epididymal maturation and capacitation. This chain is Cystic fibrosis transmembrane conductance regulator, found in Microcebus murinus (Gray mouse lemur).